The chain runs to 289 residues: Dehydrodolichyl diphosphate synthase 4 (289 aa).

A helical membrane pass occupies residues 2–22 (LSMLWFLLSLLSLLLLPCLRP).

Belongs to the UPP synthase family. It depends on Mg(2+) as a cofactor.

The protein resides in the endoplasmic reticulum membrane. It participates in protein modification; protein glycosylation. Catalyzes cis-prenyl chain elongation to produce the polyprenyl backbone of dolichol, a glycosyl carrier-lipid required for the biosynthesis of several classes of glycoprotein. This chain is Dehydrodolichyl diphosphate synthase 4, found in Arabidopsis thaliana (Mouse-ear cress).